The sequence spans 348 residues: Protein RecA (348 aa).

Residue 67-74 participates in ATP binding; that stretch reads GPESSGKT.

It belongs to the RecA family.

It localises to the cytoplasm. Functionally, can catalyze the hydrolysis of ATP in the presence of single-stranded DNA, the ATP-dependent uptake of single-stranded DNA by duplex DNA, and the ATP-dependent hybridization of homologous single-stranded DNAs. It interacts with LexA causing its activation and leading to its autocatalytic cleavage. The sequence is that of Protein RecA from Amycolatopsis mediterranei (strain U-32).